A 93-amino-acid polypeptide reads, in one-letter code: Small ribosomal subunit protein bS20 (93 aa).

The protein belongs to the bacterial ribosomal protein bS20 family.

Binds directly to 16S ribosomal RNA. This is Small ribosomal subunit protein bS20 from Hydrogenobaculum sp. (strain Y04AAS1).